The sequence spans 832 residues: Protein monoglycylase TTLL8 (832 aa).

Residues 1–13 (MSCPPTPNPPFRP) show a composition bias toward pro residues. Disordered stretches follow at residues 1-84 (MSCP…QDLS) and 277-304 (GKSK…KLPS). 3 stretches are compositionally biased toward basic and acidic residues: residues 46-59 (QLRE…ERKK), 66-75 (DGDHKEENKL), and 280-299 (KKEE…ENPD). Residues 271–624 (YCSKVKGKSK…RKLDRNCDIG (354 aa)) enclose the TTL domain. ATP contacts are provided by residues lysine 397, 403-404 (RG), 435-438 (QKYI), 448-450 (KFD), and 492-493 (CN). Arginine 403 provides a ligand contact to a protein. Serine 495 provides a ligand contact to L-glutamate. Mg(2+) contacts are provided by aspartate 570, glutamate 583, and asparagine 585. Glutamate 583 lines the ATP pocket.

The cofactor is Mg(2+). Highly expressed in testis. Expressed in brain, heart, kidney, liver, lung, muscle, spleen and trachea. Expressed in sperm flagellum. In the brain, specifically expressed in ependymal cilia.

It localises to the cytoplasm. Its subcellular location is the cytoskeleton. The protein resides in the cell projection. The protein localises to the cilium. It is found in the cilium axoneme. It localises to the flagellum axoneme. It carries out the reaction L-glutamyl-[protein] + glycine + ATP = glycyl-L-glutamyl-[protein] + ADP + phosphate + H(+). Functionally, monoglycylase which modifies both tubulin and non-tubulin proteins, adding a single glycine on the gamma-carboxyl groups of specific glutamate residues to generate monoglycine side chains within the C-terminal tail of target proteins. Not involved in elongation step of the polyglycylation reaction. Preferentially monoglycylates alpha-tubulin over beta-tubulin. Together with TTLL3, mediates microtubule glycylation of primary and motile cilia, which is essential for their stability and maintenance. Together with TTLL3, glycylates sperm flagella which regulates axonemal dynein motor activity, thereby controlling flagellar beat, directional sperm swimming and male fertility. Monoglycylates non-tubulin proteins such as ANP32A, ANP32B, SET, NCL and NAP1. The polypeptide is Protein monoglycylase TTLL8 (Mus musculus (Mouse)).